A 1011-amino-acid chain; its full sequence is DNA-directed RNA polymerase 2, chloroplastic/mitochondrial (1011 aa).

The interval 307-326 is disordered; it reads KGDDNEESGGVENETSMKEQ. Catalysis depends on residues D712, K787, and D944.

It belongs to the phage and mitochondrial RNA polymerase family. As to quaternary structure, interacts with NIP1 and NIP2.

The protein localises to the plastid. Its subcellular location is the chloroplast. It is found in the mitochondrion. It catalyses the reaction RNA(n) + a ribonucleoside 5'-triphosphate = RNA(n+1) + diphosphate. Functionally, DNA-dependent RNA polymerase catalyzes the transcription of DNA into RNA using the four ribonucleoside triphosphates as substrates. This chain is DNA-directed RNA polymerase 2, chloroplastic/mitochondrial (RPOT2), found in Arabidopsis thaliana (Mouse-ear cress).